The chain runs to 721 residues: Cytosolic carboxypeptidase 2 (721 aa).

The interval 43–71 (TASDMINSSSPSESSDSNLEEEQEESKPC) is disordered. Low complexity predominate over residues 50-59 (SSSPSESSDS). The region spanning 334–605 (YPYTYSKLQH…CFCDTLLDFC (272 aa)) is the Peptidase M14 domain. Residues His-400, Glu-403, and His-496 each coordinate Zn(2+). Catalysis depends on Glu-569, which acts as the Proton donor/acceptor. The interval 645 to 721 (DIESSTSGSN…TQHGDTEDQS (77 aa)) is disordered. The segment covering 647-660 (ESSTSGSNSTESDG) has biased composition (low complexity). Positions 672–688 (GKKKLLRSRKERNRLRQ) are enriched in basic residues. Residues 703–714 (YSCQTLNATTQH) show a composition bias toward polar residues.

It belongs to the peptidase M14 family. Zn(2+) is required as a cofactor.

It is found in the cytoplasm. Its subcellular location is the cytosol. It localises to the cytoskeleton. The protein localises to the microtubule organizing center. The protein resides in the centrosome. It is found in the centriole. Its subcellular location is the cilium basal body. It carries out the reaction (L-glutamyl)(n+1)-gamma-L-glutamyl-L-glutamyl-[protein] + H2O = (L-glutamyl)(n)-gamma-L-glutamyl-L-glutamyl-[protein] + L-glutamate. Its function is as follows. Metallocarboxypeptidase that mediates deglutamylation of target proteins. Catalyzes the deglutamylation of polyglutamate side chains generated by post-translational polyglutamylation in proteins such as tubulins. Also removes gene-encoded polyglutamates from the carboxy-terminus of target proteins such as MYLK. Does not show detyrosinase or deglycylase activities from the carboxy-terminus of tubulin. Metallocarboxypeptidase that mediates deglutamylation of tubulin and non-tubulin target proteins. Catalyzes the removal of polyglutamate side chains present on the gamma-carboxyl group of glutamate residues within the C-terminal tail of tubulin protein. Specifically cleaves tubulin long-side-chains, while it is not able to remove the branching point glutamate. Also catalyzes the removal of polyglutamate residues from the carboxy-terminus of non-tubulin proteins. The chain is Cytosolic carboxypeptidase 2 (zte25) from Danio rerio (Zebrafish).